We begin with the raw amino-acid sequence, 1542 residues long: Pleiotropic ABC efflux transporter of multiple drugs PDH1 (1542 aa).

Residues M1–S14 show a composition bias toward low complexity. The interval M1–D61 is disordered. Residues M1–N517 lie on the Cytoplasmic side of the membrane. Over residues N24–A33 the composition is skewed to basic and acidic residues. Residues S35 to S47 are compositionally biased toward polar residues. Positions V153 to K409 constitute an ABC transporter 1 domain. The next 6 helical transmembrane spans lie at S518–F540, F552–I574, V603–V625, F634–F652, L662–I684, and G773–C792. Over E793–D1220 the chain is Cytoplasmic. The span at T825–I834 shows a compositional bias: basic and acidic residues. The disordered stretch occupies residues T825–T846. The segment covering E835 to T846 has biased composition (polar residues). One can recognise an ABC transporter 2 domain in the interval F885–A1128. Residue G921–T928 participates in ATP binding. Helical transmembrane passes span Y1221–F1241, S1256–V1276, A1296–A1316, L1342–I1362, T1370–A1390, and G1495–A1515. At R1516–F1542 the chain is on the cytoplasmic side.

This sequence belongs to the ABC transporter superfamily. ABCG family. PDR (TC 3.A.1.205) subfamily. Post-translationally, phosphorylated by PKA. Dephosphorylated on glucose depletion and independently rephosphorylated during glucose exposure or under stress.

Its subcellular location is the cell membrane. In terms of biological role, pleiotropic ABC efflux transporter that confers resistance to structurally and functionally unrelated compounds including caspofungin or azoles such as fluconazole, itraconazole, posaconazole, voriconazole, and isavuconazole. Does not play a role in the azole resistance in mature biofilms. The chain is Pleiotropic ABC efflux transporter of multiple drugs PDH1 from Candida glabrata (strain ATCC 2001 / BCRC 20586 / JCM 3761 / NBRC 0622 / NRRL Y-65 / CBS 138) (Yeast).